The sequence spans 352 residues: tRNA uridine(34) hydroxylase (352 aa).

The region spanning 146 to 240 is the Rhodanese domain; that stretch reads DNPDTLFVDM…YARKAREQGL (95 aa). The Cysteine persulfide intermediate role is filled by C200. Basic and acidic residues predominate over residues 315 to 328; that stretch reads ETEQRARRAGRENG. Residues 315–352 form a disordered region; that stretch reads ETEQRARRAGRENGAKIFNKSRHRLQDGLNSTSLQSVE. Residues 342 to 352 show a composition bias toward polar residues; that stretch reads GLNSTSLQSVE.

The protein belongs to the TrhO family.

It catalyses the reaction uridine(34) in tRNA + AH2 + O2 = 5-hydroxyuridine(34) in tRNA + A + H2O. Catalyzes oxygen-dependent 5-hydroxyuridine (ho5U) modification at position 34 in tRNAs. The polypeptide is tRNA uridine(34) hydroxylase (Photorhabdus laumondii subsp. laumondii (strain DSM 15139 / CIP 105565 / TT01) (Photorhabdus luminescens subsp. laumondii)).